The following is an 875-amino-acid chain: Phosphoenolpyruvate carboxylase (875 aa).

Residues histidine 137 and lysine 542 contribute to the active site.

The protein belongs to the PEPCase type 1 family. The cofactor is Mg(2+).

It carries out the reaction oxaloacetate + phosphate = phosphoenolpyruvate + hydrogencarbonate. In terms of biological role, forms oxaloacetate, a four-carbon dicarboxylic acid source for the tricarboxylic acid cycle. The polypeptide is Phosphoenolpyruvate carboxylase (Pseudomonas putida (strain ATCC 700007 / DSM 6899 / JCM 31910 / BCRC 17059 / LMG 24140 / F1)).